Here is a 94-residue protein sequence, read N- to C-terminus: Large ribosomal subunit protein uL23 (94 aa).

This sequence belongs to the universal ribosomal protein uL23 family. In terms of assembly, part of the 50S ribosomal subunit. Contacts protein L29, and trigger factor when it is bound to the ribosome.

One of the early assembly proteins it binds 23S rRNA. One of the proteins that surrounds the polypeptide exit tunnel on the outside of the ribosome. Forms the main docking site for trigger factor binding to the ribosome. The polypeptide is Large ribosomal subunit protein uL23 (Roseiflexus castenholzii (strain DSM 13941 / HLO8)).